We begin with the raw amino-acid sequence, 450 residues long: Phosphoglucosamine mutase 2 (450 aa).

The active-site Phosphoserine intermediate is Ser101. Mg(2+) is bound by residues Ser101, Asp245, Asp247, and Asp249. Ser101 carries the post-translational modification Phosphoserine.

It belongs to the phosphohexose mutase family. Mg(2+) serves as cofactor. Post-translationally, activated by phosphorylation.

It catalyses the reaction alpha-D-glucosamine 1-phosphate = D-glucosamine 6-phosphate. Its function is as follows. Catalyzes the conversion of glucosamine-6-phosphate to glucosamine-1-phosphate. The sequence is that of Phosphoglucosamine mutase 2 from Shewanella baltica (strain OS185).